The sequence spans 552 residues: Berberine bridge enzyme-like 6 (552 aa).

The N-terminal stretch at 1–16 is a signal peptide; that stretch reads MKEAFVFLLCLTNKFP. C56 and C119 form a disulfide bridge. Residues N76, N161, N280, N364, N419, and N463 are each glycosylated (N-linked (GlcNAc...) asparagine). The FAD-binding PCMH-type domain occupies 93-270; sequence FSSPNFKKLL…LSWKINLVEV (178 aa). The 6-(S-cysteinyl)-8alpha-(pros-histidyl)-FAD (His-Cys) cross-link spans 134-196; it reads HDNEGFSYMS…QTLAFPAGVC (63 aa).

This sequence belongs to the oxygen-dependent FAD-linked oxidoreductase family. The cofactor is FAD. The FAD cofactor is bound via a bicovalent 6-S-cysteinyl, 8alpha-N1-histidyl FAD linkage.

It is found in the secreted. Its subcellular location is the cell wall. In terms of biological role, probable flavin-dependent oxidoreductase. In Arabidopsis thaliana (Mouse-ear cress), this protein is Berberine bridge enzyme-like 6.